Reading from the N-terminus, the 314-residue chain is ATP synthase gamma chain (314 aa).

This sequence belongs to the ATPase gamma chain family. F-type ATPases have 2 components, CF(1) - the catalytic core - and CF(0) - the membrane proton channel. CF(1) has five subunits: alpha(3), beta(3), gamma(1), delta(1), epsilon(1). CF(0) has three main subunits: a, b and c.

It localises to the cell membrane. Its function is as follows. Produces ATP from ADP in the presence of a proton gradient across the membrane. The gamma chain is believed to be important in regulating ATPase activity and the flow of protons through the CF(0) complex. In Lactiplantibacillus plantarum (strain ATCC BAA-793 / NCIMB 8826 / WCFS1) (Lactobacillus plantarum), this protein is ATP synthase gamma chain.